Here is a 339-residue protein sequence, read N- to C-terminus: MIVNDNQNILYVGIDFGYSKTVIMTSRGKSLSLKSLVGYPKDFVGLARLGRPYLVGDEAFEMRSYLHLRNPLLDGLLNPISEQDIDVTRHFISHIIKCAEPAAGEKVFAVIGVTPRFTAANKKLLLKLAQEYCQNVLLMSAPFLAGNSIGKASGSIIIDIGAWTTDICAMKGRIPRPEDQSSIAKAGSYIDERLKNSILERYPALQINANIARMVKEQFAFVGRPQLVAACEFRSAGKAVRCDVTEQVRAACESPFAEIAERIGAVLCVVPPEDQALVLKNIVITGAGAQIRGLPEYVKSMLAPYGDARVSIANEPLMEACKGALSMAQEIPPHFWGQL.

Residues tyrosine 18–serine 19, aspartate 74, alanine 162–threonine 164, and lysine 216–alanine 220 contribute to the ATP site.

It belongs to the FtsA/MreB family. MamK subfamily. In terms of assembly, forms cytoplasmic filament polymers. Forms filaments with MamK.

It localises to the cytoplasm. It is found in the cytoskeleton. It carries out the reaction ATP + H2O = ADP + phosphate + H(+). In terms of biological role, protein with ATPase activity which forms pole-to-pole filaments in vivo, probably with MamK. Efficient filament formation requires MamK. Probably promotes turnover of MamK filaments, by providing a monomer pool. In vivo, in the absence of its paralog MamK, forms thin filaments from pole to pole. In vitro forms straight filaments and bundles in the absence of ATP. Filament formation is triggered by KCl and MgCl(2); polymerizes more slowly and makes thinner filaments than MamK. Expression in E.coli yields a filament in the cell's longitudinal axis; the protein nucleates at one pole or the cell septum. The polypeptide is MamK-like protein (Paramagnetospirillum magneticum (strain ATCC 700264 / AMB-1) (Magnetospirillum magneticum)).